The sequence spans 47 residues: Protein RL9A (47 aa).

A helical transmembrane segment spans residues 27–47 (CMIIVIMIAISIWILTYVLFL).

Its subcellular location is the host membrane. The sequence is that of Protein RL9A (RL9A) from Human cytomegalovirus (strain Merlin) (HHV-5).